A 312-amino-acid chain; its full sequence is Methionyl-tRNA formyltransferase (312 aa).

Residue 110-113 (SLLP) coordinates (6S)-5,6,7,8-tetrahydrofolate.

The protein belongs to the Fmt family.

The catalysed reaction is L-methionyl-tRNA(fMet) + (6R)-10-formyltetrahydrofolate = N-formyl-L-methionyl-tRNA(fMet) + (6S)-5,6,7,8-tetrahydrofolate + H(+). Functionally, attaches a formyl group to the free amino group of methionyl-tRNA(fMet). The formyl group appears to play a dual role in the initiator identity of N-formylmethionyl-tRNA by promoting its recognition by IF2 and preventing the misappropriation of this tRNA by the elongation apparatus. This chain is Methionyl-tRNA formyltransferase, found in Mycobacterium ulcerans (strain Agy99).